Reading from the N-terminus, the 187-residue chain is Ribosome maturation factor RimM (187 aa).

The PRC barrel domain maps to 96–169 (EDEFFYADLE…KLVIDPTAAG (74 aa)).

The protein belongs to the RimM family. As to quaternary structure, binds ribosomal protein uS19.

The protein localises to the cytoplasm. Functionally, an accessory protein needed during the final step in the assembly of 30S ribosomal subunit, possibly for assembly of the head region. Essential for efficient processing of 16S rRNA. May be needed both before and after RbfA during the maturation of 16S rRNA. It has affinity for free ribosomal 30S subunits but not for 70S ribosomes. This chain is Ribosome maturation factor RimM, found in Rhizobium meliloti (strain 1021) (Ensifer meliloti).